Consider the following 313-residue polypeptide: Olfactory receptor 1G1 (313 aa).

The Extracellular portion of the chain corresponds to 1 to 25 (MEGKNLTSISEFFLLGFSEQLEEQK). N5 carries N-linked (GlcNAc...) asparagine glycosylation. The helical transmembrane segment at 26–49 (ALFGSFLFMYLVTVAGNLLIILVI) threads the bilayer. At 50–57 (ITDTQLHT) the chain is on the cytoplasmic side. A helical membrane pass occupies residues 58–79 (PMYFFLANLSLADACFVSTTVP). The Extracellular portion of the chain corresponds to 80-100 (KMLANIQIQSQAISYSGCLLQ). A disulfide bridge links C97 with C189. Residues 101–120 (LYFFMLFVMLEAFLLAVMAY) traverse the membrane as a helical segment. The Cytoplasmic segment spans residues 121-140 (DRYVAICHPLHYILIMSPGL). Residues 141–158 (CVFLVSASWIMNALHSLL) form a helical membrane-spanning segment. Topologically, residues 159-196 (HTLLMNSLSFCANHEIPHFFCDIDPLLSLSCTDPFTNE) are extracellular. The chain crosses the membrane as a helical span at residues 197-219 (LVIFITGGLTGLVCVLCLIISYT). Residues 220-236 (NIFSTILKIPSAQGKRK) lie on the Cytoplasmic side of the membrane. The chain crosses the membrane as a helical span at residues 237-259 (AFSTCGSHLSVVSLFFGTSFCVY). Residues 260–272 (FIPPSTRSAQKDT) lie on the Extracellular side of the membrane. A helical membrane pass occupies residues 273–292 (VASVMYTVVTPMLNPFIYSL). The Cytoplasmic portion of the chain corresponds to 293–313 (RNQEIKSSLRKLIWVREIHSP).

It belongs to the G-protein coupled receptor 1 family.

It localises to the cell membrane. Functionally, odorant receptor. This Gorilla gorilla gorilla (Western lowland gorilla) protein is Olfactory receptor 1G1 (OR1G1).